Reading from the N-terminus, the 493-residue chain is Galactose-1-phosphate uridylyltransferase (493 aa).

Belongs to the galactose-1-phosphate uridylyltransferase type 2 family.

Its subcellular location is the cytoplasm. It carries out the reaction alpha-D-galactose 1-phosphate + UDP-alpha-D-glucose = alpha-D-glucose 1-phosphate + UDP-alpha-D-galactose. It participates in carbohydrate metabolism; galactose metabolism. This Lactococcus lactis subsp. lactis (strain IL1403) (Streptococcus lactis) protein is Galactose-1-phosphate uridylyltransferase (galT).